A 357-amino-acid polypeptide reads, in one-letter code: Sorbitol dehydrogenase (357 aa).

An N-acetylalanine modification is found at A2. C45 provides a ligand contact to Zn(2+). Y51 is a substrate binding site. Zn(2+) is bound by residues H70 and E71. Substrate is bound at residue E156. 3 residues coordinate NAD(+): I184, D204, and R209. A phosphoserine mark is found at S211 and S225. NAD(+)-binding positions include 273 to 275 (VGL) and 297 to 299 (VFR). 2 residues coordinate substrate: R299 and Y300.

Belongs to the zinc-containing alcohol dehydrogenase family. Homotetramer. It depends on Zn(2+) as a cofactor. As to expression, expressed in liver. Expressed in kidney and epithelial cells of both benign and malignant prostate tissue. Expressed in epididymis (at protein level).

The protein resides in the mitochondrion membrane. It is found in the cell projection. The protein localises to the cilium. It localises to the flagellum. The enzyme catalyses keto-D-fructose + NADH + H(+) = D-sorbitol + NAD(+). The catalysed reaction is L-threitol + NAD(+) = L-erythrulose + NADH + H(+). It carries out the reaction xylitol + NAD(+) = D-xylulose + NADH + H(+). It catalyses the reaction ribitol + NAD(+) = D-ribulose + NADH + H(+). The enzyme catalyses (R,R)-butane-2,3-diol + NAD(+) = (R)-acetoin + NADH + H(+). The catalysed reaction is L-iditol + NAD(+) = keto-L-sorbose + NADH + H(+). With respect to regulation, inhibited by CP-166,572, an inhibitor that is competitive with fructose. Also competitively inhibited by phenanthroline and 4-methylpyrazole in vitro. In terms of biological role, polyol dehydrogenase that catalyzes the reversible NAD(+)-dependent oxidation of various sugar alcohols. Is mostly active with D-sorbitol (D-glucitol), L-threitol, xylitol and ribitol as substrates, leading to the C2-oxidized products D-fructose, L-erythrulose, D-xylulose, and D-ribulose, respectively. Is a key enzyme in the polyol pathway that interconverts glucose and fructose via sorbitol, which constitutes an important alternate route for glucose metabolism. The polyol pathway is believed to be involved in the etiology of diabetic complications, such as diabetic neuropathy and retinopathy, induced by hyperglycemia. May play a role in sperm motility by using sorbitol as an alternative energy source for sperm motility. May have a more general function in the metabolism of secondary alcohols since it also catalyzes the stereospecific oxidation of (2R,3R)-2,3-butanediol. To a lesser extent, can also oxidize L-arabinitol, galactitol and D-mannitol and glycerol in vitro. Oxidizes neither ethanol nor other primary alcohols. Cannot use NADP(+) as the electron acceptor. The sequence is that of Sorbitol dehydrogenase (SORD) from Homo sapiens (Human).